The sequence spans 146 residues: Actin-depolymerizing factor 6 (146 aa).

S13 bears the Phosphoserine mark. Residues 14 to 146 (GMGVADESKT…DLEVLRERAN (133 aa)) form the ADF-H domain.

The protein belongs to the actin-binding proteins ADF family. In terms of processing, phosphorylated. In terms of tissue distribution, expressed in vascular tissues of all organs.

The protein localises to the cytoplasm. The protein resides in the cytoskeleton. Actin-depolymerizing protein. Severs actin filaments (F-actin) and binds to actin monomers. The sequence is that of Actin-depolymerizing factor 6 (ADF6) from Arabidopsis thaliana (Mouse-ear cress).